The following is a 67-amino-acid chain: Large ribosomal subunit protein uL29 (67 aa).

This sequence belongs to the universal ribosomal protein uL29 family.

The chain is Large ribosomal subunit protein uL29 from Acetivibrio thermocellus (strain ATCC 27405 / DSM 1237 / JCM 9322 / NBRC 103400 / NCIMB 10682 / NRRL B-4536 / VPI 7372) (Clostridium thermocellum).